We begin with the raw amino-acid sequence, 335 residues long: (+)-caryolan-1-ol synthase (335 aa).

Positions 83, 87, 220, 224, and 228 each coordinate Mg(2+). Residues 83-87 (DDEFD) carry the DDXXD motif motif. Positions 220 to 228 (NDICSFEKE) match the NSE/DTE motif motif.

The protein belongs to the terpene synthase family. Mg(2+) serves as cofactor. It depends on Mn(2+) as a cofactor.

The catalysed reaction is (2E,6E)-farnesyl diphosphate = (+)-(E)-beta-caryophyllene + diphosphate. It carries out the reaction (+)-(E)-beta-caryophyllene + H2O = (+)-caryolan-1-ol. It functions in the pathway secondary metabolite biosynthesis; terpenoid biosynthesis. Functionally, sesquiterpene cyclase that first catalyzes the cyclization of farnesyl diphosphate (FPP) to the bicyclic sesquiterpene (+)-beta-caryophyllene intermediate, and then its conversion to (+)-caryolan-1-ol via a second cyclization and the addition of a water molecule. The protein is (+)-caryolan-1-ol synthase (gcoA) of Streptomyces griseus subsp. griseus (strain JCM 4626 / CBS 651.72 / NBRC 13350 / KCC S-0626 / ISP 5235).